The primary structure comprises 35 residues: Putative neurotoxin (35 aa).

In terms of domain architecture, LCN-type CS-alpha/beta spans 1–35 (KEGYPKNSEGCKITCLFNDPYCKGLCINLSTQADY).

In terms of tissue distribution, expressed by the venom gland.

It localises to the secreted. In terms of biological role, causes paralysis and death in insects (A.domestica). This Rhopalurus junceus (Caribbean blue scorpion) protein is Putative neurotoxin.